We begin with the raw amino-acid sequence, 681 residues long: DNA ligase (681 aa).

NAD(+) contacts are provided by residues 45–49 (DFDFD), 94–95 (SL), and E120. K122 (N6-AMP-lysine intermediate) is an active-site residue. Residues R143, E177, K289, and K313 each contribute to the NAD(+) site. Zn(2+) is bound by residues C403, C406, C421, and C426. The 89-residue stretch at 593–681 (ADQQPFAGQS…SLKIDFKNLI (89 aa)) folds into the BRCT domain.

It belongs to the NAD-dependent DNA ligase family. LigA subfamily. Mg(2+) serves as cofactor. Requires Mn(2+) as cofactor.

It catalyses the reaction NAD(+) + (deoxyribonucleotide)n-3'-hydroxyl + 5'-phospho-(deoxyribonucleotide)m = (deoxyribonucleotide)n+m + AMP + beta-nicotinamide D-nucleotide.. In terms of biological role, DNA ligase that catalyzes the formation of phosphodiester linkages between 5'-phosphoryl and 3'-hydroxyl groups in double-stranded DNA using NAD as a coenzyme and as the energy source for the reaction. It is essential for DNA replication and repair of damaged DNA. The polypeptide is DNA ligase (Leptospira interrogans serogroup Icterohaemorrhagiae serovar Lai (strain 56601)).